The sequence spans 210 residues: Putative tyrosine-protein phosphatase OCA1 (210 aa).

The 161-residue stretch at 44 to 204 folds into the Tyrosine-protein phosphatase domain; the sequence is NFCPVERYLY…EIDREKAPNW (161 aa). Catalysis depends on Cys-140, which acts as the Phosphocysteine intermediate.

The protein belongs to the protein-tyrosine phosphatase family.

The protein localises to the cytoplasm. It carries out the reaction O-phospho-L-tyrosyl-[protein] + H2O = L-tyrosyl-[protein] + phosphate. Putative tyrosine-protein phosphatase required for protection against superoxide stress. The protein is Putative tyrosine-protein phosphatase OCA1 (OCA1) of Kluyveromyces lactis (strain ATCC 8585 / CBS 2359 / DSM 70799 / NBRC 1267 / NRRL Y-1140 / WM37) (Yeast).